We begin with the raw amino-acid sequence, 169 residues long: Endoribonuclease YbeY (169 aa).

Zn(2+) contacts are provided by His-135, His-139, and His-145.

This sequence belongs to the endoribonuclease YbeY family. It depends on Zn(2+) as a cofactor.

Its subcellular location is the cytoplasm. Its function is as follows. Single strand-specific metallo-endoribonuclease involved in late-stage 70S ribosome quality control and in maturation of the 3' terminus of the 16S rRNA. In Lachnospira eligens (strain ATCC 27750 / DSM 3376 / VPI C15-48 / C15-B4) (Eubacterium eligens), this protein is Endoribonuclease YbeY.